A 263-amino-acid polypeptide reads, in one-letter code: Small ribosomal subunit protein eS4 (263 aa).

In terms of domain architecture, S4 RNA-binding spans Leu42 to Asp104.

This sequence belongs to the eukaryotic ribosomal protein eS4 family.

The sequence is that of Small ribosomal subunit protein eS4 (RPS4) from Bos taurus (Bovine).